The sequence spans 64 residues: Conotoxin Tx3.5-a (64 aa).

The N-terminal stretch at 1-19 is a signal peptide; that stretch reads MSKLGVLLTICLLLFPLTA. The propeptide occupies 20-47; that stretch reads LPLDGDQPADQAAERMQAEQHPLFDQKR. Cystine bridges form between cysteine 49-cysteine 58, cysteine 50-cysteine 62, and cysteine 54-cysteine 63. Cysteine amide is present on cysteine 63.

This sequence belongs to the conotoxin M superfamily. In terms of processing, contains 3 disulfide bonds. Two peptides are produced from this precursor. Conotoxin Tx3.5-b is amidated at Cys-63, conotoxin Tx3.5-a has an unmodified C-terminus. Expressed by the venom duct. Is present in all duct parts with a highest content in part 2 (proximal of the venom bulb) and then decreases in concentration toward the end of the duct.

It is found in the secreted. The protein is Conotoxin Tx3.5-a of Conus textile (Cloth-of-gold cone).